A 799-amino-acid chain; its full sequence is Potassium transporter 21 (799 aa).

Residues 1 to 56 (MDPGVEKKKQQMELVDVESGGLPVERQDSLFREAVRAEHAGAAHWDEQDSWGRTMS) are Cytoplasmic-facing. The chain crosses the membrane as a helical span at residues 57–77 (LAFQCVGILYGDIGTSSLYVY). At 78–93 (SSTFEHGIGHPDDVVG) the chain is on the extracellular side. The helical transmembrane segment at 94 to 114 (VLSLIVYSFMLFTVIKIVFVA) threads the bilayer. At 115 to 181 (LHANDHGDGG…QLLEASKAAK (67 aa)) the chain is on the cytoplasmic side. A helical membrane pass occupies residues 182–202 (ISLFLLTILAIAMVISDAVLT). Residues 203–219 (PPISVLSAVGGLREKVP) are Extracellular-facing. A helical membrane pass occupies residues 220–240 (HLTTDQIVWITVAILVVLFAI). The Cytoplasmic portion of the chain corresponds to 241–251 (QRYGTDKVGYS). Residues 252-272 (FAPIILLWLLLIGATGLYNLI) form a helical membrane-spanning segment. The Extracellular segment spans residues 273–301 (KHDISVLRAFNPKYIIDYFRRNKKEGWVS). A helical membrane pass occupies residues 302–322 (LGSILLCFTGSEALFANLGYF). Residues 323–328 (SIRSIQ) lie on the Cytoplasmic side of the membrane. Residues 329–349 (LSFSFALLPSVLLTYIGQAAF) form a helical membrane-spanning segment. Topologically, residues 350–362 (LSKNPKNVANTFF) are extracellular. The chain crosses the membrane as a helical span at residues 363–383 (AATPISLFWPTFIMAIAASII). Residues 384 to 420 (GSQAMISCAFATVSHLQSLSCFPRVKILHTSKRFPGQ) lie on the Cytoplasmic side of the membrane. Residues 421–441 (LYIPGVNFLLCVAACVVTVSF) form a helical membrane-spanning segment. The Extracellular segment spans residues 442–452 (KTTVIIGKAHE). Residues 453 to 473 (ICVILVMIITTLLMTIVMLLV) traverse the membrane as a helical segment. The Cytoplasmic segment spans residues 474 to 475 (WK). A helical transmembrane segment spans residues 476-496 (INILWVALFFITFTSTEAVYL). Topologically, residues 497–508 (SSVLYKFTHGPY) are extracellular. Residues 509-529 (VPVAMSVVLMVVMIVWHYVHV) form a helical membrane-spanning segment. The Cytoplasmic portion of the chain corresponds to 530-799 (KRYKYELEHT…LLKVGISYEI (270 aa)).

This sequence belongs to the HAK/KUP transporter (TC 2.A.72.3) family.

The protein localises to the membrane. High-affinity potassium transporter. This Oryza sativa subsp. japonica (Rice) protein is Potassium transporter 21 (HAK21).